A 294-amino-acid polypeptide reads, in one-letter code: Bifunctional protein FolD (294 aa).

Residues 171–173 (GRS), Ser196, and Ile237 each bind NADP(+).

The protein belongs to the tetrahydrofolate dehydrogenase/cyclohydrolase family. In terms of assembly, homodimer.

It carries out the reaction (6R)-5,10-methylene-5,6,7,8-tetrahydrofolate + NADP(+) = (6R)-5,10-methenyltetrahydrofolate + NADPH. The catalysed reaction is (6R)-5,10-methenyltetrahydrofolate + H2O = (6R)-10-formyltetrahydrofolate + H(+). Its pathway is one-carbon metabolism; tetrahydrofolate interconversion. In terms of biological role, catalyzes the oxidation of 5,10-methylenetetrahydrofolate to 5,10-methenyltetrahydrofolate and then the hydrolysis of 5,10-methenyltetrahydrofolate to 10-formyltetrahydrofolate. This chain is Bifunctional protein FolD, found in Synechocystis sp. (strain ATCC 27184 / PCC 6803 / Kazusa).